A 151-amino-acid polypeptide reads, in one-letter code: UPF0208 membrane protein YfbV (151 aa).

Helical transmembrane passes span 46–65 (FGIRFMPPLAIFTLTWQIAL) and 69–91 (LGPAVATALFACSLPMQGLWWLG).

The protein belongs to the UPF0208 family.

It is found in the cell inner membrane. This Photorhabdus temperata protein is UPF0208 membrane protein YfbV (yfbV).